Consider the following 172-residue polypeptide: RNA silencing suppressor p19 (172 aa).

The span at 1 to 20 shows a compositional bias: basic and acidic residues; it reads MERAIQGNDAREQANSERWD. The tract at residues 1-37 is disordered; sequence MERAIQGNDAREQANSERWDGGSGGTTSPFKLPDESP.

Belongs to the tombusvirus protein p19 family. Homodimer.

Viral suppressor of RNA silencing which binds specifically to silencing RNAs (siRNAs). Acts as a molecular caliper to specifically select siRNAs based on the length of the duplex region of the RNA. This is RNA silencing suppressor p19 from Tomato bushy stunt virus (strain Ja6) (TBSV).